The chain runs to 308 residues: Phosphoribosylaminoimidazole-succinocarboxamide synthase (308 aa).

Belongs to the SAICAR synthetase family.

The catalysed reaction is 5-amino-1-(5-phospho-D-ribosyl)imidazole-4-carboxylate + L-aspartate + ATP = (2S)-2-[5-amino-1-(5-phospho-beta-D-ribosyl)imidazole-4-carboxamido]succinate + ADP + phosphate + 2 H(+). It functions in the pathway purine metabolism; IMP biosynthesis via de novo pathway; 5-amino-1-(5-phospho-D-ribosyl)imidazole-4-carboxamide from 5-amino-1-(5-phospho-D-ribosyl)imidazole-4-carboxylate: step 1/2. The chain is Phosphoribosylaminoimidazole-succinocarboxamide synthase from Xylella fastidiosa (strain Temecula1 / ATCC 700964).